The primary structure comprises 173 residues: Shikimate kinase (173 aa).

14-19 contacts ATP; sequence GAGKST. Residue Ser-18 coordinates Mg(2+). Residues Asp-36, Arg-60, and Gly-82 each contribute to the substrate site. Arg-120 serves as a coordination point for ATP. Arg-139 lines the substrate pocket. Gln-156 contributes to the ATP binding site.

This sequence belongs to the shikimate kinase family. Monomer. Mg(2+) serves as cofactor.

The protein localises to the cytoplasm. It catalyses the reaction shikimate + ATP = 3-phosphoshikimate + ADP + H(+). The protein operates within metabolic intermediate biosynthesis; chorismate biosynthesis; chorismate from D-erythrose 4-phosphate and phosphoenolpyruvate: step 5/7. Functionally, catalyzes the specific phosphorylation of the 3-hydroxyl group of shikimic acid using ATP as a cosubstrate. In Actinobacillus pleuropneumoniae serotype 5b (strain L20), this protein is Shikimate kinase.